The chain runs to 392 residues: L-rhamnonate dehydratase (392 aa).

Substrate is bound by residues histidine 22 and arginine 48. Mg(2+) is bound by residues aspartate 214, glutamate 240, and glutamate 268. Histidine 318 functions as the Proton acceptor in the catalytic mechanism. Position 338 (glutamate 338) interacts with substrate.

It belongs to the mandelate racemase/muconate lactonizing enzyme family. RhamD subfamily. In terms of assembly, homooctamer; tetramer of dimers. The cofactor is Mg(2+).

It carries out the reaction L-rhamnonate = 2-dehydro-3-deoxy-L-rhamnonate + H2O. Functionally, catalyzes the dehydration of L-rhamnonate to 2-keto-3-deoxy-L-rhamnonate (KDR). This is L-rhamnonate dehydratase from Paraburkholderia xenovorans (strain LB400).